A 275-amino-acid chain; its full sequence is Elongation factor Ts (275 aa).

The tract at residues threonine 80–valine 83 is involved in Mg(2+) ion dislocation from EF-Tu.

The protein belongs to the EF-Ts family.

Its subcellular location is the cytoplasm. In terms of biological role, associates with the EF-Tu.GDP complex and induces the exchange of GDP to GTP. It remains bound to the aminoacyl-tRNA.EF-Tu.GTP complex up to the GTP hydrolysis stage on the ribosome. This Clavibacter sepedonicus (Clavibacter michiganensis subsp. sepedonicus) protein is Elongation factor Ts.